Here is a 185-residue protein sequence, read N- to C-terminus: ATP-dependent protease subunit HslV (185 aa).

Residue Thr2 is part of the active site. Na(+) contacts are provided by Gly157, Cys160, and Thr163.

Belongs to the peptidase T1B family. HslV subfamily. As to quaternary structure, a double ring-shaped homohexamer of HslV is capped on each side by a ring-shaped HslU homohexamer. The assembly of the HslU/HslV complex is dependent on binding of ATP.

It is found in the cytoplasm. The enzyme catalyses ATP-dependent cleavage of peptide bonds with broad specificity.. Its activity is regulated as follows. Allosterically activated by HslU binding. In terms of biological role, protease subunit of a proteasome-like degradation complex believed to be a general protein degrading machinery. The protein is ATP-dependent protease subunit HslV of Idiomarina loihiensis (strain ATCC BAA-735 / DSM 15497 / L2-TR).